The sequence spans 635 residues: Two-component response regulator ARR18 (635 aa).

One can recognise a Response regulatory domain in the interval 19–133 (RVLAVDDNPT…ELQNIWHHVV (115 aa)). Asp-70 carries the 4-aspartylphosphate modification. Disordered stretches follow at residues 144–196 (LPPS…KKPR) and 323–342 (IQQG…GTYH). Acidic residues predominate over residues 166–186 (SGDEDDSDREEDDGEGSEQDG). Residues 193–196 (KKPR) carry the Nuclear localization signal motif. The segment at residues 196-246 (RVVWSQELHQKFVSAVQQLGLDKAVPKKILDLMSIEGLTRENVASHLQKYR) is a DNA-binding region (myb-like GARP).

The protein belongs to the ARR family. Type-B subfamily. As to quaternary structure, binds the target DNA as a monomer. Two-component system major event consists of a His-to-Asp phosphorelay between a sensor histidine kinase (HK) and a response regulator (RR). In plants, the His-to-Asp phosphorelay involves an additional intermediate named Histidine-containing phosphotransfer protein (HPt). This multistep phosphorelay consists of a His-Asp-His-Asp sequential transfer of a phosphate group between first a His and an Asp of the HK protein, followed by the transfer to a conserved His of the HPt protein and finally the transfer to an Asp in the receiver domain of the RR protein. In terms of tissue distribution, predominantly expressed in young leaf tissue developing anthers, and siliques.

It is found in the nucleus. Its function is as follows. Transcriptional activator that binds specifically to the DNA sequence 5'-[AG]GATT-3'. Functions as a response regulator involved in His-to-Asp phosphorelay signal transduction system. Phosphorylation of the Asp residue in the receiver domain activates the ability of the protein to promote the transcription of target genes. Could directly activate some type-A response regulators in response to cytokinins. This Arabidopsis thaliana (Mouse-ear cress) protein is Two-component response regulator ARR18 (ARR18).